The following is a 540-amino-acid chain: 2-isopropylmalate synthase (540 aa).

The 266-residue stretch at 8 to 273 (VLIFDTTLRD…FFGRDQDSPT (266 aa)) folds into the Pyruvate carboxyltransferase domain. Positions 17, 208, 210, and 244 each coordinate Mn(2+). The interval 408 to 540 (QLQLVQVSCG…AVVLDARPTL (133 aa)) is regulatory domain.

The protein belongs to the alpha-IPM synthase/homocitrate synthase family. LeuA type 1 subfamily. Homodimer. It depends on Mn(2+) as a cofactor.

It is found in the cytoplasm. The catalysed reaction is 3-methyl-2-oxobutanoate + acetyl-CoA + H2O = (2S)-2-isopropylmalate + CoA + H(+). Its pathway is amino-acid biosynthesis; L-leucine biosynthesis; L-leucine from 3-methyl-2-oxobutanoate: step 1/4. In terms of biological role, catalyzes the condensation of the acetyl group of acetyl-CoA with 3-methyl-2-oxobutanoate (2-ketoisovalerate) to form 3-carboxy-3-hydroxy-4-methylpentanoate (2-isopropylmalate). This Parasynechococcus marenigrum (strain WH8102) protein is 2-isopropylmalate synthase.